Consider the following 212-residue polypeptide: uncharacterized protein (212 aa).

Belongs to the IIV-6 309L family.

This is an uncharacterized protein from Aedes vexans (Inland floodwater mosquito).